Consider the following 569-residue polypeptide: 4-coumarate--CoA ligase 2 (569 aa).

Residues S219, S220, G221, T222, T223, and K227 each coordinate ATP. 2 residues coordinate (E)-4-coumaroyl-AMP: F269 and S273. R290 contacts CoA. The tract at residues 292–361 (EMGAMLGAIE…ARLPQAIFGQ (70 aa)) is SBD1. (E)-4-coumaroyl-AMP is bound by residues A339, Q361, G362, T366, and M374. Residues Q361, G362, and T366 each coordinate ATP. The interval 362–429 (GYGMTEAGPV…IRGPQIMKGY (68 aa)) is SBD2. ATP contacts are provided by D450 and R465. 2 residues coordinate (E)-4-coumaroyl-AMP: K467 and K471. CoA-binding residues include K473 and G474. K556 lines the ATP pocket.

Belongs to the ATP-dependent AMP-binding enzyme family. Requires Mg(2+) as cofactor. As to expression, expressed in roots, stems, leaf blades, leaf sheaths and spikelets.

It catalyses the reaction (E)-ferulate + ATP + CoA = (E)-feruloyl-CoA + AMP + diphosphate. The enzyme catalyses (E)-4-coumarate + ATP + CoA = (E)-4-coumaroyl-CoA + AMP + diphosphate. It carries out the reaction (E)-caffeate + ATP + CoA = (E)-caffeoyl-CoA + AMP + diphosphate. The catalysed reaction is (E)-cinnamate + ATP + CoA = (E)-cinnamoyl-CoA + AMP + diphosphate. It catalyses the reaction (E)-ferulate + ATP + H(+) = (E)-feruloyl-AMP + diphosphate. The enzyme catalyses (E)-feruloyl-AMP + CoA = (E)-feruloyl-CoA + AMP + H(+). It carries out the reaction (E)-4-coumarate + ATP + H(+) = (E)-4-coumaroyl-AMP + diphosphate. The catalysed reaction is (E)-4-coumaroyl-AMP + CoA = (E)-4-coumaroyl-CoA + AMP + H(+). It catalyses the reaction (E)-caffeate + ATP + H(+) = (E)-caffeoyl-AMP + diphosphate. The enzyme catalyses (E)-caffeoyl-AMP + CoA = (E)-caffeoyl-CoA + AMP + H(+). It functions in the pathway phytoalexin biosynthesis; 3,4',5-trihydroxystilbene biosynthesis; 3,4',5-trihydroxystilbene from trans-4-coumarate: step 1/2. In terms of biological role, involved in the phenylpropanoid metabolism by mediating the activation of a number of hydroxycinnamates for the biosynthesis of monolignols and other phenolic secondary metabolites. Catalyzes the formation of CoA esters of cinnamate, 4-coumarate, caffeate and ferulate. Is more efficient with substrates in the following order: ferulate &gt; 4-coumarate &gt; caffeate &gt; cinnamate. Cannot convert sinapate to its corresponding CoA ester. Follows a two-step reaction mechanism, wherein the carboxylate substrate first undergoes adenylation by ATP, followed by a thioesterification in the presence of CoA to yield the final CoA thioester. The chain is 4-coumarate--CoA ligase 2 from Oryza sativa subsp. japonica (Rice).